We begin with the raw amino-acid sequence, 782 residues long: Gelsolin (782 aa).

Positions 1 to 27 (MAPHRPAPALLCALSLALCALSLPVRA) are cleaved as a signal peptide. Residues 53–176 (VVEHPEFLKA…YKKGGVASGF (124 aa)) form an actin-severing region. A Gelsolin-like 1 repeat occupies 76–158 (FDLVPVPTNL…VQGFESATFL (83 aa)). Residue Y86 is modified to Phosphotyrosine; by SRC; in vitro. Ca(2+) is bound by residues G92, D93, E124, D136, G141, and A143. The interval 123 to 126 (DESG) is actin-actin interfilament contact point. An a 1,2-diacyl-sn-glycero-3-phospho-(1D-myo-inositol-4,5-bisphosphate)-binding site is contributed by 162 to 169 (KSGLKYKK). Residue V172 participates in Ca(2+) binding. 188-196 (RLFQVKGRR) contributes to the a 1,2-diacyl-sn-glycero-3-phospho-(1D-myo-inositol-4,5-bisphosphate) binding site. The Gelsolin-like 2 repeat unit spans residues 198–270 (VRATEVPVSW…SEEGTEPEAM (73 aa)). Residues G213 and D214 each contribute to the Ca(2+) site. C215 and C228 are joined by a disulfide. E236 provides a ligand contact to Ca(2+). Positions 247–262 (IRDNERSGRARVHVSE) are enriched in basic and acidic residues. A disordered region spans residues 247–285 (IRDNERSGRARVHVSEEGTEPEAMLQVLGPKPALPAGTE). Residues D286, E329, D330, and E354 each coordinate Ca(2+). The stretch at 317 to 389 (DENPFAQGAL…LPEGGETPLF (73 aa)) is one Gelsolin-like 3 repeat. Residue Y409 is modified to Phosphotyrosine; by SRC; in vitro. Positions 434 to 782 (AAQHGMDDDG…LDRAMAELAA (349 aa)) are actin-binding, Ca-sensitive. A Gelsolin-like 4 repeat occupies 455–536 (SNKVPVDPAT…VQGKEPAHLM (82 aa)). Phosphotyrosine; by SRC is present on Y465. The Ca(2+) site is built by G471, D472, E502, D514, G519, P521, and T551. Residues 576–642 (TRAVEVLPKA…AEGSEPDGFW (67 aa)) form a Gelsolin-like 5 repeat. Residue K584 is modified to N6-acetyllysine. N591 and D592 together coordinate Ca(2+). A Phosphotyrosine; by SRC; in vitro modification is found at Y603. E614 serves as a coordination point for Ca(2+). Y651 carries the post-translational modification Phosphotyrosine; by SRC; in vitro. One copy of the Gelsolin-like 6 repeat lies at 681–756 (IEEVPGELMQ…VKQGFEPPSF (76 aa)). Residues D696, D697, and E719 each coordinate Ca(2+). The residue at position 742 (T742) is a Phosphothreonine.

This sequence belongs to the villin/gelsolin family. Binds to actin and to fibronectin. Identified in a complex composed of ACTA1, COBL, GSN and TMSB4X. Interacts with the inactive form of EIF2AK2/PKR. Interacts with FLII. Phosphorylation on Tyr-86, Tyr-409, Tyr-465, Tyr-603 and Tyr-651 in vitro is induced in presence of phospholipids. Phagocytic cells, platelets, fibroblasts, nonmuscle cells, smooth and skeletal muscle cells.

The protein localises to the cytoplasm. The protein resides in the cytoskeleton. Its subcellular location is the secreted. Calcium-regulated, actin-modulating protein that binds to the plus (or barbed) ends of actin monomers or filaments, preventing monomer exchange (end-blocking or capping). It can promote the assembly of monomers into filaments (nucleation) as well as sever filaments already formed. Plays a role in ciliogenesis. The chain is Gelsolin (GSN) from Homo sapiens (Human).